Consider the following 373-residue polypeptide: Glutamate 5-kinase (373 aa).

Lys15 contributes to the ATP binding site. Residues Ser55, Asp142, and Asn154 each contribute to the substrate site. Residues 174-175 (TD) and 216-222 (TGGMVTK) each bind ATP. The 79-residue stretch at 281–359 (SGKIIVDDGA…GEIEAILGYK (79 aa)) folds into the PUA domain.

This sequence belongs to the glutamate 5-kinase family.

The protein resides in the cytoplasm. The catalysed reaction is L-glutamate + ATP = L-glutamyl 5-phosphate + ADP. The protein operates within amino-acid biosynthesis; L-proline biosynthesis; L-glutamate 5-semialdehyde from L-glutamate: step 1/2. In terms of biological role, catalyzes the transfer of a phosphate group to glutamate to form L-glutamate 5-phosphate. In Geobacter sulfurreducens (strain ATCC 51573 / DSM 12127 / PCA), this protein is Glutamate 5-kinase.